A 601-amino-acid polypeptide reads, in one-letter code: NADH-quinone oxidoreductase subunit C/D (601 aa).

The segment at 1-191 (MKLTREFPSN…DPFMLDAVKQ (191 aa)) is NADH dehydrogenase I subunit C. Positions 215–601 (DYMFLNLGPN…IDFVMSDVDR (387 aa)) are NADH dehydrogenase I subunit D.

This sequence in the N-terminal section; belongs to the complex I 30 kDa subunit family. The protein in the C-terminal section; belongs to the complex I 49 kDa subunit family. As to quaternary structure, NDH-1 is composed of 13 different subunits. Subunits NuoB, CD, E, F, and G constitute the peripheral sector of the complex.

It is found in the cell inner membrane. The enzyme catalyses a quinone + NADH + 5 H(+)(in) = a quinol + NAD(+) + 4 H(+)(out). In terms of biological role, NDH-1 shuttles electrons from NADH, via FMN and iron-sulfur (Fe-S) centers, to quinones in the respiratory chain. The immediate electron acceptor for the enzyme in this species is believed to be ubiquinone. Couples the redox reaction to proton translocation (for every two electrons transferred, four hydrogen ions are translocated across the cytoplasmic membrane), and thus conserves the redox energy in a proton gradient. The protein is NADH-quinone oxidoreductase subunit C/D of Aeromonas hydrophila subsp. hydrophila (strain ATCC 7966 / DSM 30187 / BCRC 13018 / CCUG 14551 / JCM 1027 / KCTC 2358 / NCIMB 9240 / NCTC 8049).